The primary structure comprises 344 residues: Biotin synthase (344 aa).

One can recognise a Radical SAM core domain in the interval 40–267 (AEVQVSTLLS…KSMVRLSAGR (228 aa)). [4Fe-4S] cluster is bound by residues C55, C59, and C62. [2Fe-2S] cluster is bound by residues C99, C130, C190, and R262.

The protein belongs to the radical SAM superfamily. Biotin synthase family. Homodimer. It depends on [4Fe-4S] cluster as a cofactor. [2Fe-2S] cluster is required as a cofactor.

It catalyses the reaction (4R,5S)-dethiobiotin + (sulfur carrier)-SH + 2 reduced [2Fe-2S]-[ferredoxin] + 2 S-adenosyl-L-methionine = (sulfur carrier)-H + biotin + 2 5'-deoxyadenosine + 2 L-methionine + 2 oxidized [2Fe-2S]-[ferredoxin]. It participates in cofactor biosynthesis; biotin biosynthesis; biotin from 7,8-diaminononanoate: step 2/2. Functionally, catalyzes the conversion of dethiobiotin (DTB) to biotin by the insertion of a sulfur atom into dethiobiotin via a radical-based mechanism. In Xanthomonas campestris pv. campestris (strain 8004), this protein is Biotin synthase.